Reading from the N-terminus, the 31-residue chain is Cytochrome b6-f complex subunit 6 (31 aa).

Residues 4-24 (ITSYFGFLLAALTITSALFIG) form a helical membrane-spanning segment.

The protein belongs to the PetL family. As to quaternary structure, the 4 large subunits of the cytochrome b6-f complex are cytochrome b6, subunit IV (17 kDa polypeptide, PetD), cytochrome f and the Rieske protein, while the 4 small subunits are PetG, PetL, PetM and PetN. The complex functions as a dimer.

It is found in the plastid. The protein localises to the chloroplast thylakoid membrane. Its function is as follows. Component of the cytochrome b6-f complex, which mediates electron transfer between photosystem II (PSII) and photosystem I (PSI), cyclic electron flow around PSI, and state transitions. PetL is important for photoautotrophic growth as well as for electron transfer efficiency and stability of the cytochrome b6-f complex. The polypeptide is Cytochrome b6-f complex subunit 6 (Hamamelis virginiana (Witch-hazel)).